A 1334-amino-acid chain; its full sequence is Putative transmembrane protein ORF1334 (1334 aa).

Residues 53-73 (VSIVVLVLTLFIIPVIIPPAH) traverse the membrane as a helical segment. The segment at 1107 to 1135 (LSASTTPPSSTTPTPPSSSSSSSSSSSIS) is disordered. Low complexity predominate over residues 1110-1135 (STTPPSSTTPTPPSSSSSSSSSSSIS). 3 helical membrane-spanning segments follow: residues 1256-1276 (AVLPPIYALPLFLLFAGSFFI), 1292-1312 (IIYIFFVAPFLIVIGIPTSVV), and 1313-1333 (YGTVVGALIIIIIGLWASRSQ).

The protein resides in the host membrane. This Acidianus two-tailed virus (ATV) protein is Putative transmembrane protein ORF1334.